The primary structure comprises 424 residues: UPF0597 protein SO_1403 (424 aa).

This sequence belongs to the UPF0597 family.

This chain is UPF0597 protein SO_1403, found in Shewanella oneidensis (strain ATCC 700550 / JCM 31522 / CIP 106686 / LMG 19005 / NCIMB 14063 / MR-1).